The sequence spans 35 residues: Cytochrome b6-f complex subunit 5 (35 aa).

The chain crosses the membrane as a helical span at residues 5–25; it reads LLTGIVLGSIFITLLGLLAAA.

The protein belongs to the PetG family. The 4 large subunits of the cytochrome b6-f complex are cytochrome b6, subunit IV (17 kDa polypeptide, PetD), cytochrome f and the Rieske protein, while the 4 small subunits are PetG, PetL, PetM and PetN. The complex functions as a dimer.

The protein resides in the plastid. The protein localises to the chloroplast thylakoid membrane. Functionally, component of the cytochrome b6-f complex, which mediates electron transfer between photosystem II (PSII) and photosystem I (PSI), cyclic electron flow around PSI, and state transitions. PetG is required for either the stability or assembly of the cytochrome b6-f complex. The chain is Cytochrome b6-f complex subunit 5 from Cyanidium caldarium (Red alga).